A 448-amino-acid chain; its full sequence is Methylenetetrahydrofolate--tRNA-(uracil-5-)-methyltransferase TrmFO (448 aa).

An FAD-binding site is contributed by 13-18 (GAGLAG).

The protein belongs to the MnmG family. TrmFO subfamily. FAD serves as cofactor.

Its subcellular location is the cytoplasm. It catalyses the reaction uridine(54) in tRNA + (6R)-5,10-methylene-5,6,7,8-tetrahydrofolate + NADH + H(+) = 5-methyluridine(54) in tRNA + (6S)-5,6,7,8-tetrahydrofolate + NAD(+). The enzyme catalyses uridine(54) in tRNA + (6R)-5,10-methylene-5,6,7,8-tetrahydrofolate + NADPH + H(+) = 5-methyluridine(54) in tRNA + (6S)-5,6,7,8-tetrahydrofolate + NADP(+). In terms of biological role, catalyzes the folate-dependent formation of 5-methyl-uridine at position 54 (M-5-U54) in all tRNAs. The chain is Methylenetetrahydrofolate--tRNA-(uracil-5-)-methyltransferase TrmFO from Streptococcus pyogenes serotype M12 (strain MGAS2096).